Reading from the N-terminus, the 198-residue chain is Holliday junction resolvase RecU (198 aa).

A disordered region spans residues 1–21; that stretch reads MVNYPHKLSSQKRQPSLSQPK. Residues 11-21 are compositionally biased toward polar residues; sequence QKRQPSLSQPK. 4 residues coordinate Mg(2+): Thr-81, Asp-83, Glu-96, and Gln-115.

It belongs to the RecU family. Mg(2+) is required as a cofactor.

Its subcellular location is the cytoplasm. It catalyses the reaction Endonucleolytic cleavage at a junction such as a reciprocal single-stranded crossover between two homologous DNA duplexes (Holliday junction).. Functionally, endonuclease that resolves Holliday junction intermediates in genetic recombination. Cleaves mobile four-strand junctions by introducing symmetrical nicks in paired strands. Promotes annealing of linear ssDNA with homologous dsDNA. Required for DNA repair, homologous recombination and chromosome segregation. This Streptococcus pneumoniae (strain ATCC 700669 / Spain 23F-1) protein is Holliday junction resolvase RecU.